The sequence spans 264 residues: uncharacterized protein (264 aa).

Positions 1–22 are cleaved as a signal peptide; that stretch reads MKRKLTICLLIALIFYNGNAKA. The chain crosses the membrane as a helical span at residues 227-247; the sequence is LLWVIITTGSIIITALTYVGY.

Its subcellular location is the membrane. This is an uncharacterized protein from Bacillus subtilis (strain 168).